The primary structure comprises 380 residues: GTP-binding protein 10 (380 aa).

The Obg domain occupies 13-148; that stretch reads GNFVDNVRLY…RNIRLDLKLI (136 aa). An OBG-type G domain is found at 149–344; sequence ADFGLVGFPN…LKSLIRQSLE (196 aa). Residues 155–162, 202–206, and 278–281 each bind GTP; these read GFPNAGKS, DLPGL, and NKMD.

It belongs to the TRAFAC class OBG-HflX-like GTPase superfamily. OBG GTPase family.

Its subcellular location is the nucleus. It localises to the nucleolus. May be involved in the ribosome maturation process. The sequence is that of GTP-binding protein 10 (gtpbp10) from Danio rerio (Zebrafish).